The sequence spans 909 residues: Valine--tRNA ligase (909 aa).

Residues 52–62 (PNVTGVLHVGH) carry the 'HIGH' region motif. The 'KMSKS' region motif lies at 542 to 546 (KMSKS). Lys-545 serves as a coordination point for ATP. A coiled-coil region spans residues 843–902 (IDIDQLKKRFEKELEKNEQNASKIDSKLKNENFVKNAPPEVIEGEKEKHAEFLRRIEKLK).

The protein belongs to the class-I aminoacyl-tRNA synthetase family. ValS type 1 subfamily. In terms of assembly, monomer.

It localises to the cytoplasm. It catalyses the reaction tRNA(Val) + L-valine + ATP = L-valyl-tRNA(Val) + AMP + diphosphate. Catalyzes the attachment of valine to tRNA(Val). As ValRS can inadvertently accommodate and process structurally similar amino acids such as threonine, to avoid such errors, it has a 'posttransfer' editing activity that hydrolyzes mischarged Thr-tRNA(Val) in a tRNA-dependent manner. The sequence is that of Valine--tRNA ligase from Treponema denticola (strain ATCC 35405 / DSM 14222 / CIP 103919 / JCM 8153 / KCTC 15104).